The sequence spans 60 residues: Myrmicitoxin(1)-Pr4a (60 aa).

The signal sequence occupies residues 1–23 (MKAIIFLFAVLTVVAIIIPIISG). The propeptide occupies 24–33 (EPNAGPHAAS). Q59 carries the post-translational modification Glutamine amide.

Belongs to the formicidae venom clade 2 family. In terms of tissue distribution, expressed by the venom gland.

It is found in the secreted. Toxin that causes a rapid and irreversible paralysis when intrathoracically injected into insects (blowflies). Does not cause spontaneous nocifensive behaviors by intraplantar injection in mice. This Pogonomyrmex rugosus (Desert harvester ant) protein is Myrmicitoxin(1)-Pr4a.